We begin with the raw amino-acid sequence, 498 residues long: MEKYIMSLDQGTTSSRCIIFNKKGEIVSVAQKEFTQIYPKAGWVEHDPLEIWGKQAGVAGEALNIARISPEQIAGIGITNQRETTVVWNKRTGMPVYNAIVWQCRRTAGYCDELREKGIDKTIKEKTGLMLDAYFSATKIKWILDNVEGARELAEKGDLLFGNIDTWLIWNMTKGKIHVTDYTNASRTMLFNIHELKWDEELLEILDIPKSMLPEVKPSSCVYGETDEILFGVSIPISGDAGDQQAALFGQTCFNAGMAKNTYGTGCFLLMNTGEKAVDSKNGLLTTIAVGIDGKVEYALEGSIFIGGAVIQWLRDELRMVKTAQETEKYATEVEDNNGVYLVPAFVGIGAPYWDSYARGTILGLTRGAKKEHIIRAALESMAYQTHDVLKAMEEDSGIELKALKVDGGACQNNFLMQFQSDILGVEVDRPEVVETTALGAAYLAGLAVGYWKDRNEISQNWAISRSFAPAMEDEKREKLIKGWHKAVTKAMDWEDKE.

Thr12 lines the ADP pocket. Thr12, Thr13, and Ser14 together coordinate ATP. Thr12 lines the sn-glycerol 3-phosphate pocket. ADP is bound at residue Arg16. Residues Arg82, Glu83, Tyr134, and Asp243 each contribute to the sn-glycerol 3-phosphate site. Glycerol is bound by residues Arg82, Glu83, Tyr134, Asp243, and Gln244. ADP-binding residues include Thr265 and Gly308. 4 residues coordinate ATP: Thr265, Gly308, Gln312, and Gly409. The ADP site is built by Gly409 and Asn413.

Belongs to the FGGY kinase family. As to quaternary structure, homotetramer and homodimer (in equilibrium).

The catalysed reaction is glycerol + ATP = sn-glycerol 3-phosphate + ADP + H(+). The protein operates within polyol metabolism; glycerol degradation via glycerol kinase pathway; sn-glycerol 3-phosphate from glycerol: step 1/1. Activated by phosphorylation and inhibited by fructose 1,6-bisphosphate (FBP). Key enzyme in the regulation of glycerol uptake and metabolism. Catalyzes the phosphorylation of glycerol to yield sn-glycerol 3-phosphate. This chain is Glycerol kinase, found in Clostridium botulinum (strain 657 / Type Ba4).